Consider the following 255-residue polypeptide: Small ribosomal subunit protein uS2 (255 aa).

It belongs to the universal ribosomal protein uS2 family.

In Streptococcus pyogenes serotype M1, this protein is Small ribosomal subunit protein uS2 (rpsB).